The following is a 334-amino-acid chain: UstYa family oxidase aprY (334 aa).

The chain crosses the membrane as a helical span at residues 55 to 75 (IWILLTITNLIILGITVSMIV). Asparagine 112 carries an N-linked (GlcNAc...) asparagine glycan. The HXXHC 1 motif lies at 185-189 (HQIHC). N-linked (GlcNAc...) asparagine glycosylation is present at asparagine 214. An HXXHC 2 motif is present at residues 223–227 (HLGHC). Basic and acidic residues predominate over residues 306–318 (SELGEKLGKHQKQ). The tract at residues 306-334 (SELGEKLGKHQKQEGVLGQAGHQHTKRHE) is disordered.

This sequence belongs to the ustYa family.

Its subcellular location is the membrane. Its pathway is secondary metabolite biosynthesis. Functionally, ustYa family oxidase; part of the gene cluster that mediates the biosynthesis of the asperipin-2a, a bicyclic peptide that possesses two macrocyclic ether rings consisting of 14- and 17-membered paracyclophans. Within the pathway, aprY is responsible for the synthesis of the bicyclic structure of asperipin-2a. The pathway starts with the processing of the precursor aprA by kexin proteases to produce 11 identical copies of the hexapeptide Phe-Tyr-Tyr-Thr-Gly-Tyr. Macrocyclization of asperipin-2a may accompany an alpha-hydroxylation-dehydration sequence to give an imine, which is readily hydrolyzed to yield putative ketone intermediate. The reductase aprR may be required for the final reduction to yield asperipin-2a. In Aspergillus flavus (strain ATCC 200026 / FGSC A1120 / IAM 13836 / NRRL 3357 / JCM 12722 / SRRC 167), this protein is UstYa family oxidase aprY.